A 140-amino-acid polypeptide reads, in one-letter code: Peptidyl-prolyl cis-trans isomerase FKBP2 (140 aa).

The N-terminal stretch at methionine 1–glycine 22 is a signal peptide. One can recognise a PPIase FKBP-type domain in the interval glycine 47–glutamate 135. The Prevents secretion from ER signature appears at arginine 137 to leucine 140.

The protein belongs to the FKBP-type PPIase family. FKBP2 subfamily. In terms of assembly, interacts with ARFGEF1/BIG1 and the C-terminal of EPB41L2.

The protein localises to the endoplasmic reticulum membrane. The catalysed reaction is [protein]-peptidylproline (omega=180) = [protein]-peptidylproline (omega=0). With respect to regulation, inhibited by both FK506 and rapamycin. Functionally, PPIases accelerate the folding of proteins. It catalyzes the cis-trans isomerization of proline imidic peptide bonds in oligopeptides. The protein is Peptidyl-prolyl cis-trans isomerase FKBP2 (Fkbp2) of Mus musculus (Mouse).